The following is a 552-amino-acid chain: Probable acyl-activating enzyme 5, peroxisomal (552 aa).

The Microbody targeting signal signature appears at 550 to 552 (SRM).

The protein belongs to the ATP-dependent AMP-binding enzyme family. As to expression, expressed in roots, stems and developing seeds.

It is found in the peroxisome. May act as an acid--thiol ligase that activates carboxylic acids by forming acyl-CoAs. This is Probable acyl-activating enzyme 5, peroxisomal (AAE5) from Arabidopsis thaliana (Mouse-ear cress).